The chain runs to 1163 residues: Type IV pilus biogenesis factor PilY1 (1163 aa).

A signal peptide spans 1–30; sequence MKSALHQIGKTSLAAALSGAVLLSAQTTHA. Residues 329 to 352 form a disordered region; that stretch reads SVGNADSTSRSLPDGKSYSSQTPY. Aspartate 600, aspartate 602, asparagine 604, and aspartate 608 together coordinate Ca(2+). Residues 619–621 form an integrin-binding motif RGD region; the sequence is RGD. Ca(2+) is bound by residues aspartate 851, asparagine 853, aspartate 855, valine 857, and aspartate 859. A disordered region spans residues 1138 to 1163; the sequence is SGECLTVNPGPNTRGRQNWRPIEGKN.

The protein belongs to the PilY1 family. As to quaternary structure, interacts (via C-terminal 532-1163) with host integrins alpha-V/beta-3 (ITGAV/ITGB3) and alpha-V/beta-5 (ITGAV/ITGB5).

It is found in the fimbrium. The protein localises to the membrane. The protein resides in the cytoplasm. It localises to the cytosol. In terms of biological role, involved in pilus assembly, twitching motility and adhesion to host cells. Primes type IV pili (T4P) assembly and is required for inclusion of minor pilins PilV, PilW and PilX to the surface pili. Stabilizes assembled pilus fibers likely by antagonizing retraction mediated by PilT. Calcium-binding and calcium release by PilY1 seem to be essential for twitching motility and for regulation of pilus retraction dynamics of PilT. Adhesin for human tissue specifically recognizing a host receptor localized or enriched on basolateral epithelial cell surfaces. Binds host integrins in an calcium-dependent manner in vitro and this interaction may be employed by the bacterium to mediate host epithelial cell binding in vivo. This Pseudomonas aeruginosa (strain PAK) protein is Type IV pilus biogenesis factor PilY1.